Here is a 543-residue protein sequence, read N- to C-terminus: Transmembrane protease serine 13 (543 aa).

Disordered stretches follow at residues 1–96 (MDRG…TRVY) and 109–129 (RASPARSAPATRATRESPGLS). At 1-143 (MDRGSHRNSS…SWQETQRQLP (143 aa)) the chain is on the cytoplasmic side. 2 repeat units span residues 14-17 (TPPQ) and 18-22 (ASPAR). Residues 14–49 (TPPQASPARTSPARAPPQASPARTPPQASPARTPPQ) form a 4 X 4 AA repeats of T-P-P-Q region. Residues 18 to 69 (ASPARTSPARAPPQASPARTPPQASPARTPPQASPARAPPPQASPARASPAR) are 8 X 5 AA repeats of A-S-P-A-R. A 2-2; approximate repeat occupies 23–27 (TSPAR). The segment covering 27–60 (RAPPQASPARTPPQASPARTPPQASPARAPPPQA) has biased composition (pro residues). One copy of the 1-2; approximate repeat lies at 28 to 31 (APPQ). 5 consecutive repeat copies span residues 32-36 (ASPAR), 37-40 (TPPQ), 41-45 (ASPAR), 46-49 (TPPQ), and 50-54 (ASPAR). Residues 55 to 59 (APPPQ) form a 2-6; approximate repeat. Repeat copies occupy residues 60-64 (ASPAR) and 65-69 (ASPAR). 2 stretches are compositionally biased toward low complexity: residues 61–94 (SPARASPARAPPSRSSSGRSSSARSASTTSSPTR) and 109–120 (RASPARSAPATR). Residues 144–164 (LIGCVILLISLVISLILLFYF) form a helical; Signal-anchor for type II membrane protein membrane-spanning segment. At 165-543 (WRGHTGIKYK…MESEVRFRKS (379 aa)) the chain is on the extracellular side. The region spanning 180–202 (CPIHAVRCDGVVDCKMKSDELGC) is the LDL-receptor class A domain. The SRCR domain occupies 199–301 (ELGCVRFDWD…HCGLRAMTGR (103 aa)). 3 disulfides stabilise this stretch: cysteine 226-cysteine 290, cysteine 239-cysteine 293, and cysteine 327-cysteine 343. N-linked (GlcNAc...) asparagine glycosylation is found at asparagine 231 and asparagine 268. A Peptidase S1 domain is found at 302–535 (IVGGALTSES…VLPWIYRKME (234 aa)). Histidine 342 acts as the Charge relay system in catalysis. Asparagine 381 carries N-linked (GlcNAc...) asparagine glycosylation. Aspartate 390 functions as the Charge relay system in the catalytic mechanism. An N-linked (GlcNAc...) asparagine glycan is attached at asparagine 421. Cystine bridges form between cysteine 424–cysteine 493, cysteine 456–cysteine 472, and cysteine 483–cysteine 511. The Charge relay system role is filled by serine 487.

It belongs to the peptidase S1 family. Interacts with SPINT1/HAI-1; the interaction promotes the phosphorylation and cell membrane localization of TMPRSS13. Interacts with SPINT2/HAI-2; the interaction promotes the phosphorylation and cell membrane localization of TMPRSS13. Post-translationally, the inactive zymogen is post-translationally modified and then trafficked to the cell surface, whereby it undergoes autocatalytic cleavage resulting in an activated form that is released extracellularly. In terms of processing, phosphorylation is required for localization at the cell surface. Phosphorylation increases following inhibition of protease activity by SPINT2/HAI-2. In terms of tissue distribution, expressed in the suprabasal squamous epithelium of the epidermis, hair follicles, oral epithelium, cornea, upper digestive tract, transitional epithelium of the bladder, prostate, heart, intestine, kidney and thymus.

It is found in the cell membrane. The protein resides in the secreted. Its subcellular location is the cytoplasm. Its activity is regulated as follows. Cleavage of HGF is inhibited by SPINT1/HAI-1 via the BPTI/Kunitz inhibitor 1 domain. Serine protease. Cleaves the proform of PRSS8/prostasin to form the active protein. Cleaves the proform of HGF to form the active protein which promotes MAPK signaling. Promotes the formation of the stratum corneum and subsequently the epidermal barrier in embryos. The chain is Transmembrane protease serine 13 (Tmprss13) from Mus musculus (Mouse).